The following is a 310-amino-acid chain: Methionyl-tRNA formyltransferase (310 aa).

111 to 114 contributes to the (6S)-5,6,7,8-tetrahydrofolate binding site; sequence SILP.

Belongs to the Fmt family.

The enzyme catalyses L-methionyl-tRNA(fMet) + (6R)-10-formyltetrahydrofolate = N-formyl-L-methionyl-tRNA(fMet) + (6S)-5,6,7,8-tetrahydrofolate + H(+). In terms of biological role, attaches a formyl group to the free amino group of methionyl-tRNA(fMet). The formyl group appears to play a dual role in the initiator identity of N-formylmethionyl-tRNA by promoting its recognition by IF2 and preventing the misappropriation of this tRNA by the elongation apparatus. The polypeptide is Methionyl-tRNA formyltransferase (Methylobacterium sp. (strain 4-46)).